The sequence spans 39 residues: Photosystem II reaction center protein X (39 aa).

The helical transmembrane segment at 11–31 (SLLWGAIVVVIPLSAALLFIS) threads the bilayer.

Belongs to the PsbX family. Type 1 subfamily. PSII is composed of 1 copy each of membrane proteins PsbA, PsbB, PsbC, PsbD, PsbE, PsbF, PsbH, PsbI, PsbJ, PsbK, PsbL, PsbM, PsbT, PsbX, PsbY, PsbZ, Psb30/Ycf12, at least 3 peripheral proteins of the oxygen-evolving complex and a large number of cofactors. It forms dimeric complexes.

Its subcellular location is the plastid. It is found in the cyanelle thylakoid membrane. Its function is as follows. Involved in the binding and/or turnover of quinones at the Q(B) site of photosystem II (PSII). PSII is a light-driven water plastoquinone oxidoreductase, using light energy to abstract electrons from H(2)O, generating a proton gradient subsequently used for ATP formation. This is Photosystem II reaction center protein X from Cyanophora paradoxa.